The chain runs to 338 residues: Popeye domain-containing protein 1 (338 aa).

The Extracellular segment spans residues Met-1–His-40. N-linked (GlcNAc...) asparagine glycosylation is found at Asn-21 and Asn-29. Residues His-41–Leu-61 form a helical membrane-spanning segment. The Cytoplasmic segment spans residues Asn-62–Met-65. The chain crosses the membrane as a helical span at residues Ile-66–Phe-86. Residues Arg-87–Asp-91 are Extracellular-facing. Residues Ile-92–Tyr-112 traverse the membrane as a helical segment. Topologically, residues Lys-113–Cys-338 are cytoplasmic.

This sequence belongs to the popeye family.

It localises to the lateral cell membrane. The protein resides in the cell junction. Its subcellular location is the tight junction. The protein localises to the membrane. It is found in the cell membrane. It localises to the sarcolemma. The protein resides in the caveola. Cell adhesion molecule involved in the establishment and/or maintenance of cell integrity. May play a role in vamp3-mediated vesicular transport and recycling of different receptor molecules. May be involved in the formation and regulation of the tight junction (TJ) paracellular permeability barrier in epithelial cells. May induce primordial adhesive contact and aggregation of epithelial cells in a Ca(2+)-independent manner. May be involved in epithelial movement during corneal sheet formation and regeneration. May play a role in the regulation of cell shape and movement by modulating the Rho-GTPase activity. May be involved in skeletal muscle and heart development as well as in the maintenance of heart function. May also be involved in striated muscle regeneration and in the regulation of cell spreading. This chain is Popeye domain-containing protein 1 (popdc1), found in Xenopus tropicalis (Western clawed frog).